Here is a 72-residue protein sequence, read N- to C-terminus: Mitotic-spindle organizing protein 1 (72 aa).

The protein belongs to the MOZART1 family. As to quaternary structure, part of the gamma-tubulin complex.

It localises to the cytoplasm. It is found in the cytoskeleton. The protein resides in the microtubule organizing center. The protein localises to the spindle pole body. Its function is as follows. Required for gamma-tubulin complex recruitment to the microtubule organizing center (MTOC). In Coccidioides immitis (strain RS) (Valley fever fungus), this protein is Mitotic-spindle organizing protein 1.